The sequence spans 915 residues: Probable LRR receptor-like serine/threonine-protein kinase At2g16250 (915 aa).

The N-terminal stretch at 1 to 28 (MVDQRRSALGFVLLLLCLVLFFDCVVVG) is a signal peptide. The Extracellular segment spans residues 29 to 451 (QTQSRFSEKL…ISRRTVIILA (423 aa)). N-linked (GlcNAc...) asparagine glycosylation is found at asparagine 71, asparagine 78, asparagine 101, asparagine 109, asparagine 150, asparagine 158, and asparagine 177. LRR repeat units lie at residues 102–125 (LTRLSYFNASGLALPGTIPEWFGV), 127–150 (LLALEVLDLSSCSVNGVVPFTLGN), 151–174 (LTSLRTLNLSQNSLTSLVPSSLGQ), 176–198 (LNLSQLDLSRNSFTGVLPQSFSS), 199–223 (LKNLLTLDVSSNYLTGPIPPGLGAL), 225–247 (KLIHLNFSSNSFSSPIPSELGDL), 248–271 (VNLVDFDLSINSLSGSVPQELRKL), 272–295 (SKLQLMAIGDNLLSGTLPVDLFSA), 297–320 (SQLQTLVLRENGFSGSLPDVCWSL), 321–344 (PKLRILDIAKNNFTGLLPYSSYDS), and 366–390 (LRRFRIMDLSGNYFEGKLPDYVTGE). Asparagine 230 carries N-linked (GlcNAc...) asparagine glycosylation. Residue asparagine 332 is glycosylated (N-linked (GlcNAc...) asparagine). 3 N-linked (GlcNAc...) asparagine glycosylation sites follow: asparagine 391, asparagine 429, and asparagine 437. Residues 452–472 (AVGGGVAFILLFVILPIILVL) traverse the membrane as a helical segment. Over 473–915 (CMRHRRRAAQ…AAYGVVEDNL (443 aa)) the chain is Cytoplasmic. Residues 482–503 (QRGNNDRPKPAGEASQQPPKGA) are disordered. The region spanning 527–811 (FNDANLIKRG…IVNALENPLK (285 aa)) is the Protein kinase domain. Residues 533–541 (IKRGHSGNL) and lysine 555 contribute to the ATP site. The active-site Proton acceptor is aspartate 657. The disordered stretch occupies residues 851–915 (TAVQAGATTS…AAYGVVEDNL (65 aa)). The segment covering 859 to 870 (TSGGGGGGGGNG) has biased composition (gly residues). Low complexity predominate over residues 871 to 892 (LRNSGSQGSSGRNNNNNGNSSS).

Belongs to the protein kinase superfamily. Ser/Thr protein kinase family.

Its subcellular location is the membrane. It catalyses the reaction L-seryl-[protein] + ATP = O-phospho-L-seryl-[protein] + ADP + H(+). It carries out the reaction L-threonyl-[protein] + ATP = O-phospho-L-threonyl-[protein] + ADP + H(+). The sequence is that of Probable LRR receptor-like serine/threonine-protein kinase At2g16250 from Arabidopsis thaliana (Mouse-ear cress).